Reading from the N-terminus, the 426-residue chain is Serine--tRNA ligase (426 aa).

231 to 233 (TAE) contacts L-serine. ATP is bound by residues 262 to 264 (RRE) and valine 278. Glutamate 285 serves as a coordination point for L-serine. 349–352 (EVSS) lines the ATP pocket. Serine 384 provides a ligand contact to L-serine.

This sequence belongs to the class-II aminoacyl-tRNA synthetase family. Type-1 seryl-tRNA synthetase subfamily. As to quaternary structure, homodimer. The tRNA molecule binds across the dimer.

It localises to the cytoplasm. It catalyses the reaction tRNA(Ser) + L-serine + ATP = L-seryl-tRNA(Ser) + AMP + diphosphate + H(+). The enzyme catalyses tRNA(Sec) + L-serine + ATP = L-seryl-tRNA(Sec) + AMP + diphosphate + H(+). It participates in aminoacyl-tRNA biosynthesis; selenocysteinyl-tRNA(Sec) biosynthesis; L-seryl-tRNA(Sec) from L-serine and tRNA(Sec): step 1/1. Catalyzes the attachment of serine to tRNA(Ser). Is also able to aminoacylate tRNA(Sec) with serine, to form the misacylated tRNA L-seryl-tRNA(Sec), which will be further converted into selenocysteinyl-tRNA(Sec). In Chlamydia felis (strain Fe/C-56) (Chlamydophila felis), this protein is Serine--tRNA ligase.